The primary structure comprises 470 residues: Putative multidrug resistance protein MdtD (470 aa).

Topologically, residues 1-11 (MTELPDNTRWQ) are periplasmic. The helical transmembrane segment at 12–32 (LWIVALGFFMQSLDTTIVNTA) threads the bilayer. At 33-48 (LPSMAKSLGESPLHMH) the chain is on the cytoplasmic side. The helical transmembrane segment at 49–69 (MVVVSYVLTVAVMLPASGWLA) threads the bilayer. At 70–76 (DKIGVRN) the chain is on the periplasmic side. The helical transmembrane segment at 77 to 97 (IFFAAIVLFTLGSLFCALSGT) threads the bilayer. The Cytoplasmic portion of the chain corresponds to 98-101 (LNQL). Residues 102–124 (VLARVLQGVGGAMMVPVGRLTVM) form a helical membrane-spanning segment. The Periplasmic segment spans residues 125-137 (KIVPRAQYMAAMT). A helical transmembrane segment spans residues 138–158 (FVTLPGQIGPLLGPALGGVLV). The Cytoplasmic portion of the chain corresponds to 159–164 (EYASWH). The chain crosses the membrane as a helical span at residues 165–185 (WIFLINIPVGIVGAMATFMLM). The Periplasmic portion of the chain corresponds to 186–196 (PNYTIETRRFD). Residues 197-217 (LPGFLLLAIGMAVLTLALDGS) form a helical membrane-spanning segment. The Cytoplasmic portion of the chain corresponds to 218–221 (KSMG). The chain crosses the membrane as a helical span at residues 222-242 (ISPWTLAGLAAGGAAAILLYL). The Periplasmic portion of the chain corresponds to 243-262 (LHAKKNSGALFSLRLFRTPT). The chain crosses the membrane as a helical span at residues 263-283 (FSLGLLGSFAGRIGSGMLPFM). Residues 284-285 (TP) lie on the Cytoplasmic side of the membrane. The helical transmembrane segment at 286–306 (VFLQIGLGFSPFHAGLMMIPM) threads the bilayer. At 307-341 (VLGSMGMKRIVVQIVNRFGYRRVLVATTLGLALVS) the chain is on the periplasmic side. A helical transmembrane segment spans residues 342-362 (LLFMSVALLGWYYLLPLVLLL). Residues 363–395 (QGMVNSARFSSMNTLTLKDLPDTLASSGNSLLS) are Cytoplasmic-facing. A helical membrane pass occupies residues 396–416 (MIMQLSMSIGVTIAGMLLGMF). The Periplasmic portion of the chain corresponds to 417-430 (GQQHIGIDSSATHH). The helical transmembrane segment at 431 to 451 (VFMYTWLCMAVIIALPAIIFA) threads the bilayer. At 452–470 (RVPNDTQQNMVISRRKRSL) the chain is on the cytoplasmic side.

Belongs to the major facilitator superfamily. TCR/Tet family.

It localises to the cell inner membrane. The sequence is that of Putative multidrug resistance protein MdtD from Salmonella heidelberg (strain SL476).